The sequence spans 177 residues: Large ribosomal subunit protein uL6 (177 aa).

Belongs to the universal ribosomal protein uL6 family. As to quaternary structure, part of the 50S ribosomal subunit.

Functionally, this protein binds to the 23S rRNA, and is important in its secondary structure. It is located near the subunit interface in the base of the L7/L12 stalk, and near the tRNA binding site of the peptidyltransferase center. This is Large ribosomal subunit protein uL6 from Methanococcoides burtonii (strain DSM 6242 / NBRC 107633 / OCM 468 / ACE-M).